Consider the following 246-residue polypeptide: FAD synthetase (246 aa).

Belongs to the RibF family.

The catalysed reaction is FMN + ATP + H(+) = FAD + diphosphate. It functions in the pathway cofactor biosynthesis; FAD biosynthesis; FAD from FMN: step 1/1. Functionally, catalyzes the adenylation of flavin mononucleotide (FMN) to form flavin adenine dinucleotide (FAD) coenzyme. Can also catalyze, with lower efficiency, the adenylation of the toxic riboflavin analogs 8-demethyl-8-aminoriboflavin mononucleotide (AFMN) and roseoflavin mononucleotide (RoFMN) to 8-demethyl-8-aminoriboflavin adenine dinucleotide (AFAD) and roseoflavin adenine dinucleotide (RoFAD), respectively. In Listeria monocytogenes serovar 1/2a (strain ATCC BAA-679 / EGD-e), this protein is FAD synthetase.